The primary structure comprises 187 residues: Chromophore lyase CpcS/CpeS 2 (187 aa).

It belongs to the CpcS/CpeS biliprotein lyase family.

Functionally, covalently attaches a chromophore to Cys residue(s) of phycobiliproteins. This chain is Chromophore lyase CpcS/CpeS 2, found in Synechococcus sp. (strain JA-3-3Ab) (Cyanobacteria bacterium Yellowstone A-Prime).